Here is a 235-residue protein sequence, read N- to C-terminus: Ribose-5-phosphate isomerase A (235 aa).

Substrate-binding positions include 32–35, 89–92, and 102–105; these read TGST, DGAD, and KGGG. Catalysis depends on Glu-111, which acts as the Proton acceptor. Lys-129 provides a ligand contact to substrate.

This sequence belongs to the ribose 5-phosphate isomerase family. As to quaternary structure, homodimer.

It catalyses the reaction aldehydo-D-ribose 5-phosphate = D-ribulose 5-phosphate. Its pathway is carbohydrate degradation; pentose phosphate pathway; D-ribose 5-phosphate from D-ribulose 5-phosphate (non-oxidative stage): step 1/1. Catalyzes the reversible conversion of ribose-5-phosphate to ribulose 5-phosphate. The polypeptide is Ribose-5-phosphate isomerase A (Synechocystis sp. (strain ATCC 27184 / PCC 6803 / Kazusa)).